The following is a 307-amino-acid chain: Thiohydrolase apmlB (307 aa).

The protein belongs to the polyketide transferase af380 family.

Functionally, thiohydrolase; part of the gene cluster that mediates the biosynthesis of phaeospelide A, a fungal polyene macrolide with a 34-membered macrolactone ring and an all-trans conjugated hexaene structure. The HR-PKS ApmlA uses acetyl-CoA and malonyl-CoA as its starter and extender units, respectively, and provides the large carbon framework in phaeospelide via 16 cycles of polyketide chain elongation, which is the largest number identified in fungal iterative PKSs thus far. During round 1, the KR domain reduces beta -ketone to an L-oriented hydroxy group, while during later rounds, it provides hydroxy groups in the D-configuration. The characteristic conjugated hexaene moiety is built during the later rounds (10-15), when the KR and DH domains are at work but ER is off. Phylogenetic analysis of the DH domain suggests that a polyene formation is programmed in the DH domain. Finally, the mature ACP-tethered carbon chain is transferred to the serine residue of the thiohydrolase apmlB, followed by intramolecular macrolactonization, generating phaeospelide A. When one elongation cycle during rounds 7-9 is skipped, phaeospelide B is biosynthesized instead. The sequence is that of Thiohydrolase apmlB from Arthrinium phaeospermum (Gymnosporium phaeospermum).